A 247-amino-acid polypeptide reads, in one-letter code: Acidic 27 kDa endochitinase (247 aa).

The N-terminal stretch at 1-16 (MVLCCVFLLFLTGSFA) is a signal peptide. The active-site Proton donor is Glu-84. Cys-206 and Cys-238 form a disulfide bridge.

It belongs to the glycosyl hydrolase 19 family. Chitinase class II subfamily.

The protein localises to the secreted. The protein resides in the extracellular space. The catalysed reaction is Random endo-hydrolysis of N-acetyl-beta-D-glucosaminide (1-&gt;4)-beta-linkages in chitin and chitodextrins.. Defense against chitin-containing fungal pathogens. The sequence is that of Acidic 27 kDa endochitinase (CHI17) from Solanum lycopersicum (Tomato).